A 149-amino-acid polypeptide reads, in one-letter code: Cytochrome c-type biogenesis protein CcmE (149 aa).

Over 1 to 8 (MNPKRKQR) the chain is Cytoplasmic. Residues 9–29 (LIIVSFLVIGVSATVGLIMAA) traverse the membrane as a helical; Signal-anchor for type II membrane protein segment. Topologically, residues 30–149 (LSSNVNHFYN…AQDAAPAQTY (120 aa)) are periplasmic. Positions 124 and 128 each coordinate heme.

It belongs to the CcmE/CycJ family.

The protein localises to the cell inner membrane. Heme chaperone required for the biogenesis of c-type cytochromes. Transiently binds heme delivered by CcmC and transfers the heme to apo-cytochromes in a process facilitated by CcmF and CcmH. The sequence is that of Cytochrome c-type biogenesis protein CcmE from Hahella chejuensis (strain KCTC 2396).